We begin with the raw amino-acid sequence, 93 residues long: MKKLTEKEIREELNKMKGWSLKGNVIEKTFLFHDFKEAVNFLNKVQPIADSMNHHPDVCIYYNKVIVQLTTHDAGGITDLDVELAKKIDELLT.

This sequence belongs to the pterin-4-alpha-carbinolamine dehydratase family.

The catalysed reaction is (4aS,6R)-4a-hydroxy-L-erythro-5,6,7,8-tetrahydrobiopterin = (6R)-L-erythro-6,7-dihydrobiopterin + H2O. This chain is Putative pterin-4-alpha-carbinolamine dehydratase, found in Sulfurisphaera tokodaii (strain DSM 16993 / JCM 10545 / NBRC 100140 / 7) (Sulfolobus tokodaii).